Consider the following 325-residue polypeptide: MAIKNILALVVLLSVVGVSVAIPQLLDLDYYRSKCPKAEEIVRGVTVQYVSRQKTLAAKLLRMHFHDCFVRGCDGSVLLKSAKNDAERDAVPNLTLKGYEVVDAAKTALERKCPNLISCADVLALVARDAVAVIGGPWWPVPLGRRDGRISKLNDALLNLPSPFADIKTLKKNFANKGLNAKDLVVLSGGHTIGISSCALVNSRLYNFTGKGDSDPSMNPSYVRELKRKCPPTDFRTSLNMDPGSALTFDTHYFKVVAQKKGLFTSDSTLLDDIETKNYVQTQAILPPVFSSFNKDFSDSMVKLGFVQILTGKNGEIRKRCAFPN.

A signal peptide spans 1-21; it reads MAIKNILALVVLLSVVGVSVA. Intrachain disulfides connect Cys-35–Cys-113, Cys-68–Cys-73, Cys-119–Cys-321, and Cys-198–Cys-230. The Proton acceptor role is filled by His-66. Positions 67, 70, 72, 74, and 76 each coordinate Ca(2+). Pro-161 contacts substrate. His-191 provides a ligand contact to heme b. Thr-192 lines the Ca(2+) pocket. Asn-207 carries an N-linked (GlcNAc...) asparagine glycan. Residues Asp-242, Ser-245, and Asp-250 each contribute to the Ca(2+) site.

This sequence belongs to the peroxidase family. Classical plant (class III) peroxidase subfamily. Heme b serves as cofactor. Ca(2+) is required as a cofactor. Slightly expressed in roots.

The protein localises to the secreted. It catalyses the reaction 2 a phenolic donor + H2O2 = 2 a phenolic radical donor + 2 H2O. Functionally, removal of H(2)O(2), oxidation of toxic reductants, biosynthesis and degradation of lignin, suberization, auxin catabolism, response to environmental stresses such as wounding, pathogen attack and oxidative stress. These functions might be dependent on each isozyme/isoform in each plant tissue. The protein is Peroxidase 1 (PER1) of Arabidopsis thaliana (Mouse-ear cress).